Consider the following 206-residue polypeptide: Ras-related protein Ral-B (206 aa).

Gly-21–Ala-29 provides a ligand contact to GTP. The short motif at Tyr-43–Tyr-51 is the Effector region element. Residues Asp-68 to Gln-72, Asn-128 to Asp-131, and Ser-158 to Lys-160 each bind GTP. Residues Met-181–Leu-206 are disordered. Cys-203 carries the post-translational modification Cysteine methyl ester. Cys-203 carries the S-geranylgeranyl cysteine lipid modification. Residues Cys-204 to Leu-206 constitute a propeptide, removed in mature form.

The protein belongs to the small GTPase superfamily. Ras family. In terms of assembly, interacts with EXOC2/Sec5 and EXOC8/Exo84. Interacts (via effector domain) with RALBP1. Prenylation is essential for membrane localization. Post-translationally, the farnesylated form confers resistance to the proapoptotic and anti-anchorage-dependent growth effects of some geranylgeranyltransferase I inhibitors.

It is found in the cell membrane. The protein resides in the midbody. It catalyses the reaction GTP + H2O = GDP + phosphate + H(+). Its activity is regulated as follows. Alternates between an inactive form bound to GDP and an active form bound to GTP. Activated by a guanine nucleotide-exchange factor (GEF) and inactivated by a GTPase-activating protein (GAP). Its function is as follows. Multifunctional GTPase involved in a variety of cellular processes including gene expression, cell migration, cell proliferation, oncogenic transformation and membrane trafficking. Accomplishes its multiple functions by interacting with distinct downstream effectors. Acts as a GTP sensor for GTP-dependent exocytosis of dense core vesicles. Required both to stabilize the assembly of the exocyst complex and to localize functional exocyst complexes to the leading edge of migrating cells. Required for suppression of apoptosis. In late stages of cytokinesis, upon completion of the bridge formation between dividing cells, mediates exocyst recruitment to the midbody to drive abscission. Involved in ligand-dependent receptor mediated endocytosis of the EGF and insulin receptors. This Rattus norvegicus (Rat) protein is Ras-related protein Ral-B (Ralb).